A 431-amino-acid polypeptide reads, in one-letter code: MIDRYSREEMANIWTDQNRYEAWLEVEILACEAWSELGHIPKEDVKKIRQNAKVDVKRAQEIEQETRHDVVAFTRQVSETLGDERKWVHYGLTSTDVVDTALSYVIKQANEIIEKDIERFIKVLEEKAKNYKYTLMMGRTHGVHAEPTTFGVKMALWYTEMKRNLKRFKEVRKEIEVGKMSGAVGTFANIPPEIEQYVCDHLGIDTASVSTQTLQRDRHAYYIATLALVATSLEKFAVEIRNLQKTETREVEEAFAKGQKGSSAMPHKRNPIGSENITGISRVIRGYITTAYENVPLWHERDISHSSAERIMLPDVTIALDYALNRFTNIVDRLTVFEDNMRNNIDKTFGLIFSQRVLLALINKGMVREEAYDRVQPKAMESWETKTPFRQLIEKDESITNVLSKEELDECFNPEHHLNQVDTIFKRAGLE.

Residues 4 to 5, 67 to 69, and 93 to 94 each bind N(6)-(1,2-dicarboxyethyl)-AMP; these read RY, RHD, and TS. The Proton donor/acceptor role is filled by histidine 141. A N(6)-(1,2-dicarboxyethyl)-AMP-binding site is contributed by glutamine 212. The Proton donor/acceptor role is filled by serine 262. Residues serine 263, 268 to 270, asparagine 276, and 307 to 311 contribute to the N(6)-(1,2-dicarboxyethyl)-AMP site; these read KRN and SAERI.

Belongs to the lyase 1 family. Adenylosuccinate lyase subfamily. As to quaternary structure, homodimer and homotetramer. Residues from neighboring subunits contribute catalytic and substrate-binding residues to each active site.

The catalysed reaction is N(6)-(1,2-dicarboxyethyl)-AMP = fumarate + AMP. The enzyme catalyses (2S)-2-[5-amino-1-(5-phospho-beta-D-ribosyl)imidazole-4-carboxamido]succinate = 5-amino-1-(5-phospho-beta-D-ribosyl)imidazole-4-carboxamide + fumarate. The protein operates within purine metabolism; AMP biosynthesis via de novo pathway; AMP from IMP: step 2/2. It functions in the pathway purine metabolism; IMP biosynthesis via de novo pathway; 5-amino-1-(5-phospho-D-ribosyl)imidazole-4-carboxamide from 5-amino-1-(5-phospho-D-ribosyl)imidazole-4-carboxylate: step 2/2. Functionally, catalyzes two reactions in de novo purine nucleotide biosynthesis. Catalyzes the breakdown of 5-aminoimidazole- (N-succinylocarboxamide) ribotide (SAICAR or 2-[5-amino-1-(5-phospho-beta-D-ribosyl)imidazole-4-carboxamido]succinate) to 5-aminoimidazole-4-carboxamide ribotide (AICAR or 5-amino-1-(5-phospho-beta-D-ribosyl)imidazole-4-carboxamide) and fumarate, and of adenylosuccinate (ADS or N(6)-(1,2-dicarboxyethyl)-AMP) to adenosine monophosphate (AMP) and fumarate. This chain is Adenylosuccinate lyase (purB), found in Staphylococcus haemolyticus (strain JCSC1435).